Here is a 353-residue protein sequence, read N- to C-terminus: Melanin-concentrating hormone receptor 1 (353 aa).

Positions 1 to 29 (MDLEASLLPTGPNASNTSDGPDNLTSAGS) are disordered. Residues 1–44 (MDLEASLLPTGPNASNTSDGPDNLTSAGSPPRTGSISYINIIMP) are Extracellular-facing. Residues 12–29 (PNASNTSDGPDNLTSAGS) are compositionally biased toward polar residues. 3 N-linked (GlcNAc...) asparagine glycosylation sites follow: asparagine 13, asparagine 16, and asparagine 23. Residues 45 to 67 (SVFGTICLLGIIGNSTVIFAVVK) traverse the membrane as a helical segment. At 68–79 (KSKLHWCNNVPD) the chain is on the cytoplasmic side. The chain crosses the membrane as a helical span at residues 80-102 (IFIINLSVVDLLFLLGMPFMIHQ). The Extracellular portion of the chain corresponds to 103-116 (LMGNGVWHFGETMC). A disulfide bond links cysteine 116 and cysteine 194. A helical transmembrane segment spans residues 117 to 139 (TLITAMDANSQFTSTYILTAMAI). The Cytoplasmic portion of the chain corresponds to 140 to 158 (DRYLATVHPISSTKFRKPS). A helical transmembrane segment spans residues 159 to 181 (VATLVICLLWALSFISITPVWLY). Residues 182-209 (ARLIPFPGGAVGCGIRLPNPDTDLYWFT) lie on the Extracellular side of the membrane. Residues 210 to 232 (LYQFFLAFALPFVVITAAYVRIL) form a helical membrane-spanning segment. Over 233–252 (QRMTSSVAPASQRSIRLRTK) the chain is Cytoplasmic. A helical membrane pass occupies residues 253 to 275 (RVTRTAIAICLVFFVCWAPYYVL). The Extracellular portion of the chain corresponds to 276-289 (QLTQLSISRPTLTF). A helical membrane pass occupies residues 290 to 312 (VYLYNAAISLGYANSCLNPFVYI). The Cytoplasmic segment spans residues 313–353 (VLCETFRKRLVLSVKPAAQGQLRAVSNAQTADEERTESKGT).

It belongs to the G-protein coupled receptor 1 family. Interacts with NCDN. As to expression, highest level in brain, particularly in the frontal cortex and hypothalamus, lower levels in the liver and heart.

It is found in the cell membrane. Its function is as follows. Receptor for melanin-concentrating hormone, coupled to both G proteins that inhibit adenylyl cyclase and G proteins that activate phosphoinositide hydrolysis. In Homo sapiens (Human), this protein is Melanin-concentrating hormone receptor 1.